Reading from the N-terminus, the 346-residue chain is NADH-quinone oxidoreductase subunit H 2 (346 aa).

8 helical membrane-spanning segments follow: residues 14–34, 83–103, 136–156, 172–192, 208–228, 260–280, 289–309, and 324–344; these read IAMV…VAYA, FAFL…FAVI, VGVL…VLAG, SAQM…VFML, GAWY…CSIA, FFMA…TLFL, LPGW…CMWI, and LGWK…GIIV.

It belongs to the complex I subunit 1 family. As to quaternary structure, NDH-1 is composed of 14 different subunits. Subunits NuoA, H, J, K, L, M, N constitute the membrane sector of the complex.

It localises to the cell inner membrane. It carries out the reaction a quinone + NADH + 5 H(+)(in) = a quinol + NAD(+) + 4 H(+)(out). Functionally, NDH-1 shuttles electrons from NADH, via FMN and iron-sulfur (Fe-S) centers, to quinones in the respiratory chain. The immediate electron acceptor for the enzyme in this species is believed to be ubiquinone. Couples the redox reaction to proton translocation (for every two electrons transferred, four hydrogen ions are translocated across the cytoplasmic membrane), and thus conserves the redox energy in a proton gradient. This subunit may bind ubiquinone. The chain is NADH-quinone oxidoreductase subunit H 2 from Geobacter metallireducens (strain ATCC 53774 / DSM 7210 / GS-15).